Reading from the N-terminus, the 63-residue chain is MAVPARRTSKTKKRMRRGHIKLNVPNLQFDAATGEYRISHHVSPKGYYKGAQVVKKSDDNANA.

It belongs to the bacterial ribosomal protein bL32 family.

The chain is Large ribosomal subunit protein bL32 from Lacticaseibacillus paracasei (strain ATCC 334 / BCRC 17002 / CCUG 31169 / CIP 107868 / KCTC 3260 / NRRL B-441) (Lactobacillus paracasei).